Consider the following 881-residue polypeptide: Translation initiation factor IF-2 (881 aa).

Disordered regions lie at residues 53-92 and 163-292; these read RSHG…SKTT and AEAE…FERP. A compositionally biased stretch (polar residues) spans 81–92; sequence EVTVNSGRSKTT. Residues 172–186 are compositionally biased toward low complexity; sequence EAAAAAKAAEALAAA. Residues 219–236 are compositionally biased toward basic and acidic residues; it reads RNDDRNNRSAPRNERGPG. Over residues 254-263 the composition is skewed to low complexity; the sequence is GNSNNSNTRG. A tr-type G domain is found at 380–549; sequence QRPPVVTIMG…SIQAELLELK (170 aa). Residues 389-396 are G1; sequence GHVDHGKT. 389-396 contributes to the GTP binding site; sequence GHVDHGKT. The segment at 414 to 418 is G2; the sequence is GITQH. A G3 region spans residues 435 to 438; that stretch reads DTPG. Residues 435–439 and 489–492 contribute to the GTP site; these read DTPGH and NKID. The G4 stretch occupies residues 489 to 492; it reads NKID. The G5 stretch occupies residues 525–527; the sequence is SAK.

It belongs to the TRAFAC class translation factor GTPase superfamily. Classic translation factor GTPase family. IF-2 subfamily.

It localises to the cytoplasm. One of the essential components for the initiation of protein synthesis. Protects formylmethionyl-tRNA from spontaneous hydrolysis and promotes its binding to the 30S ribosomal subunits. Also involved in the hydrolysis of GTP during the formation of the 70S ribosomal complex. This chain is Translation initiation factor IF-2, found in Stenotrophomonas maltophilia (strain K279a).